A 284-amino-acid polypeptide reads, in one-letter code: Proteasome subunit beta 1 (284 aa).

Positions 1-54 are cleaved as a propeptide — removed in mature form; by autocatalysis; it reads MAQRDTGGRLGAEFFTPGDSSFTAFLAAHRPALLSTRGLLPDGVRAAPDRVPHG. Catalysis depends on Thr55, which acts as the Nucleophile. Over residues 256 to 277 the composition is skewed to basic and acidic residues; it reads RLPESETEDLSREMVEQRHTRP. A disordered region spans residues 256 to 284; that stretch reads RLPESETEDLSREMVEQRHTRPDGPTAAM.

The protein belongs to the peptidase T1B family. As to quaternary structure, the 20S proteasome core is composed of 14 alpha and 14 beta subunits that assemble into four stacked heptameric rings, resulting in a barrel-shaped structure. The two inner rings, each composed of seven catalytic beta subunits, are sandwiched by two outer rings, each composed of seven alpha subunits. The catalytic chamber with the active sites is on the inside of the barrel. Has a gated structure, the ends of the cylinder being occluded by the N-termini of the alpha-subunits. Is capped by the proteasome-associated ATPase, ARC.

It localises to the cytoplasm. It catalyses the reaction Cleavage of peptide bonds with very broad specificity.. Its pathway is protein degradation; proteasomal Pup-dependent pathway. Its activity is regulated as follows. The formation of the proteasomal ATPase ARC-20S proteasome complex, likely via the docking of the C-termini of ARC into the intersubunit pockets in the alpha-rings, may trigger opening of the gate for substrate entry. Interconversion between the open-gate and close-gate conformations leads to a dynamic regulation of the 20S proteasome proteolysis activity. Functionally, component of the proteasome core, a large protease complex with broad specificity involved in protein degradation. This is Proteasome subunit beta 1 from Streptomyces avermitilis (strain ATCC 31267 / DSM 46492 / JCM 5070 / NBRC 14893 / NCIMB 12804 / NRRL 8165 / MA-4680).